The following is a 483-amino-acid chain: O-acetyltransferase pboB (483 aa).

Belongs to the fumigaclavine B O-acetyltransferase family. Monomer.

It participates in secondary metabolite biosynthesis. O-acetyltransferase; part of the gene cluster that mediates the biosynthesis of protubonine B, a hydroxylated and diacetylated cyclo-L-Trp-L-Leu derivative. Within the pathway, pboB catalyzes the acetylation of protubonine C at N-1 of the indoline ring to produce protubonine B. The first step of the protubonine B synthesis is performed by the nonribosomal peptide synthetase pboA that catalyzes the formation of cyclo-L-Trp-L-Leu by condensing L-Leu with L-Trp. The flavin-dependent monooxygenase pboD is responsible for hydroxylation at C-3 of the indole ring and subsequent formation of the pyrrolidine ring, leadind to protubonine D. Protubonine D is further diacetylated by two acetyltransferases, pboB and pboC, to form the final product protubonine B via protubonine C. This Aspergillus ustus protein is O-acetyltransferase pboB.